The chain runs to 278 residues: Pantothenate synthetase (278 aa).

28 to 35 contacts ATP; it reads MGNLHAGH. The Proton donor role is filled by His35. Gln59 is a (R)-pantoate binding site. Gln59 serves as a coordination point for beta-alanine. 145 to 148 is an ATP binding site; that stretch reads GKKD. Gln151 contacts (R)-pantoate. 182 to 185 provides a ligand contact to ATP; sequence LSSR.

Belongs to the pantothenate synthetase family. In terms of assembly, homodimer.

Its subcellular location is the cytoplasm. It carries out the reaction (R)-pantoate + beta-alanine + ATP = (R)-pantothenate + AMP + diphosphate + H(+). The protein operates within cofactor biosynthesis; (R)-pantothenate biosynthesis; (R)-pantothenate from (R)-pantoate and beta-alanine: step 1/1. Catalyzes the condensation of pantoate with beta-alanine in an ATP-dependent reaction via a pantoyl-adenylate intermediate. This is Pantothenate synthetase from Methylobacillus flagellatus (strain ATCC 51484 / DSM 6875 / VKM B-1610 / KT).